Here is a 127-residue protein sequence, read N- to C-terminus: Fluoride-specific ion channel FluC (127 aa).

4 consecutive transmembrane segments (helical) span residues 4–24 (FSIL…RYLV), 38–58 (YGTL…IAAF), 71–91 (VIGL…MDNV), and 104–124 (LNIL…FQLL). Residues G78 and T81 each contribute to the Na(+) site.

This sequence belongs to the fluoride channel Fluc/FEX (TC 1.A.43) family.

The protein localises to the cell inner membrane. The enzyme catalyses fluoride(in) = fluoride(out). Na(+) is not transported, but it plays an essential structural role and its presence is essential for fluoride channel function. Its function is as follows. Fluoride-specific ion channel. Important for reducing fluoride concentration in the cell, thus reducing its toxicity. This chain is Fluoride-specific ion channel FluC, found in Vibrio parahaemolyticus serotype O3:K6 (strain RIMD 2210633).